Consider the following 733-residue polypeptide: LMBR1 domain-containing protein 2 homolog A (733 aa).

The next 5 membrane-spanning stretches (helical) occupy residues 1 to 21, 33 to 53, 125 to 145, 163 to 183, and 191 to 211; these read MIVIFIFILIAVGLLSTKILH, VYISVWIGWFMCFSIVILVPI, FYFGTLLLTWLVYPLMGSFVL, AYLYLIFGVIGLVVMIWLLAV, and MVGFAMAAANTWGLCLVIILM. Positions 232 to 266 form a coiled coil; it reads LKHLQFKAVELLNSKKKANEELIATMKVIRRIQEK. Helical transmembrane passes span 386-406, 423-443, 468-488, and 513-533; these read AAIVFAVLSLLIIWSEFALAF, VSNIFVQFILFFPLGYEALTC, SIIFSAAYLCRLGAPLCYNFI, and VAPFLGTYFYIYFPLLIVIVC. Disordered stretches follow at residues 581-641, 649-668, and 674-696; these read NNIK…TSSA, LKKSSNNNNNNNNNNNPYEQ, and ESNDFDDDDDIESGGAGRPTYNA. Over residues 596–619 the composition is skewed to polar residues; that stretch reads DSTSNNPKQIFKSGSTTISKQSPP. 2 stretches are compositionally biased toward low complexity: residues 620–640 and 654–664; these read NLNVSGGNINNNNTNNGNTSS and NNNNNNNNNNN. Residues 674-685 are compositionally biased toward acidic residues; it reads ESNDFDDDDDIE.

Belongs to the LIMR family.

Its subcellular location is the membrane. This chain is LMBR1 domain-containing protein 2 homolog A, found in Dictyostelium discoideum (Social amoeba).